A 224-amino-acid polypeptide reads, in one-letter code: Small ribosomal subunit protein uS3 (224 aa).

Positions 39-107 (VRKYIQNALA…PVHINIEEIR (69 aa)) constitute a KH type-2 domain.

This sequence belongs to the universal ribosomal protein uS3 family. As to quaternary structure, part of the 30S ribosomal subunit. Forms a tight complex with proteins S10 and S14.

Its function is as follows. Binds the lower part of the 30S subunit head. Binds mRNA in the 70S ribosome, positioning it for translation. The polypeptide is Small ribosomal subunit protein uS3 (Saccharophagus degradans (strain 2-40 / ATCC 43961 / DSM 17024)).